We begin with the raw amino-acid sequence, 321 residues long: MSQLYDITIVGGGPVGLFAAFYAHLRQAKVQIIDSLPQLGGQPAILYPEKEILDVPGFPNLTGEELTNRLIEQLNGFDTPIHLNETVLEIDKQEEFAITTSKGSHLTKTVIIAMGGGAFKPRPLELEGVEGYENIHYHVSNIQQYAGKKVTILGGGDSAVDWALAFEKIAPTTLVHRRDNFRALEHSVQALQESSVTIKTPFAPSQLLGNGKTLDKLEITKVKSDETETIDLDHLFVNYGFKSSVGNLKNWGLDLNRHKIIVNSKQESSQAGIYAIGDCCYYDGKIDLIATGLGEAPTAVNNAINYIDPEQKVQPKHSTSL.

FAD-binding residues include Asp34, Gln42, Tyr47, Val87, Phe119, Asp278, and Thr319.

The protein belongs to the ferredoxin--NADP reductase type 2 family. As to quaternary structure, homodimer. The cofactor is FAD.

The enzyme catalyses 2 reduced [2Fe-2S]-[ferredoxin] + NADP(+) + H(+) = 2 oxidized [2Fe-2S]-[ferredoxin] + NADPH. This is Ferredoxin--NADP reductase from Streptococcus pneumoniae serotype 4 (strain ATCC BAA-334 / TIGR4).